We begin with the raw amino-acid sequence, 245 residues long: 3-deoxy-manno-octulosonate cytidylyltransferase (245 aa).

This sequence belongs to the KdsB family.

Its subcellular location is the cytoplasm. The catalysed reaction is 3-deoxy-alpha-D-manno-oct-2-ulosonate + CTP = CMP-3-deoxy-beta-D-manno-octulosonate + diphosphate. It functions in the pathway nucleotide-sugar biosynthesis; CMP-3-deoxy-D-manno-octulosonate biosynthesis; CMP-3-deoxy-D-manno-octulosonate from 3-deoxy-D-manno-octulosonate and CTP: step 1/1. The protein operates within bacterial outer membrane biogenesis; lipopolysaccharide biosynthesis. Its function is as follows. Activates KDO (a required 8-carbon sugar) for incorporation into bacterial lipopolysaccharide in Gram-negative bacteria. The polypeptide is 3-deoxy-manno-octulosonate cytidylyltransferase (Rhodopseudomonas palustris (strain ATCC BAA-98 / CGA009)).